The primary structure comprises 157 residues: Endoribonuclease YbeY (157 aa).

Zn(2+) is bound by residues H114, H118, and H124.

Belongs to the endoribonuclease YbeY family. Zn(2+) serves as cofactor.

It is found in the cytoplasm. Its function is as follows. Single strand-specific metallo-endoribonuclease involved in late-stage 70S ribosome quality control and in maturation of the 3' terminus of the 16S rRNA. This Salmonella agona (strain SL483) protein is Endoribonuclease YbeY.